Here is a 119-residue protein sequence, read N- to C-terminus: Large ribosomal subunit protein uL24 (119 aa).

It belongs to the universal ribosomal protein uL24 family. In terms of assembly, part of the 50S ribosomal subunit.

In terms of biological role, one of two assembly initiator proteins, it binds directly to the 5'-end of the 23S rRNA, where it nucleates assembly of the 50S subunit. Its function is as follows. One of the proteins that surrounds the polypeptide exit tunnel on the outside of the subunit. The protein is Large ribosomal subunit protein uL24 of Clavibacter sepedonicus (Clavibacter michiganensis subsp. sepedonicus).